Here is a 382-residue protein sequence, read N- to C-terminus: S-adenosylmethionine synthase (382 aa).

Histidine 16 is an ATP binding site. Aspartate 18 provides a ligand contact to Mg(2+). Residue glutamate 44 participates in K(+) binding. 2 residues coordinate L-methionine: glutamate 57 and glutamine 100. The segment at 100–110 is flexible loop; the sequence is QSPDIAQGVDN. ATP contacts are provided by residues 165–167, 231–232, aspartate 240, 246–247, and lysine 267; these read DAK, RF, and RK. Aspartate 240 contacts L-methionine. L-methionine is bound at residue lysine 271.

This sequence belongs to the AdoMet synthase family. In terms of assembly, homotetramer; dimer of dimers. Requires Mg(2+) as cofactor. K(+) serves as cofactor.

The protein localises to the cytoplasm. The enzyme catalyses L-methionine + ATP + H2O = S-adenosyl-L-methionine + phosphate + diphosphate. It participates in amino-acid biosynthesis; S-adenosyl-L-methionine biosynthesis; S-adenosyl-L-methionine from L-methionine: step 1/1. Catalyzes the formation of S-adenosylmethionine (AdoMet) from methionine and ATP. The overall synthetic reaction is composed of two sequential steps, AdoMet formation and the subsequent tripolyphosphate hydrolysis which occurs prior to release of AdoMet from the enzyme. The protein is S-adenosylmethionine synthase of Legionella pneumophila (strain Paris).